The following is a 227-amino-acid chain: Endo-1,4-beta-xylanase 11A (227 aa).

The first 36 residues, 1 to 36, serve as a signal peptide directing secretion; it reads MVSASSLLLAASAIAGVFSAPAAAPVSENLNVLQER. Residues 37–227 form the GH11 domain; it reads ALTSSATGTS…SSGSASITVS (191 aa). The necrosis inducing domain stretch occupies residues 112-136; the sequence is VYGWTTSPLIEYYIVEDFGTYDPSS. E122 acts as the Nucleophile in catalysis. The active-site Proton donor is the E214.

It belongs to the glycosyl hydrolase 11 (cellulase G) family.

The protein resides in the secreted. It catalyses the reaction Endohydrolysis of (1-&gt;4)-beta-D-xylosidic linkages in xylans.. Its pathway is glycan degradation; xylan degradation. With respect to regulation, significantly inhibited by the wheat xylanase inhibiting protein I (XIP-I) and the proteinaceous endoxylanase Triticum aestivum xylanase inhibitors I (TAXI-I), whereas no inhibition is detected with TAXI-II. Its function is as follows. Endo-1,4-beta-xylanase involved in the hydrolysis of xylan, a major structural heterogeneous polysaccharide found in plant biomass representing the second most abundant polysaccharide in the biosphere, after cellulose. Required for plant infection and the appearance of secondary lesions. Is able to induce necrosis on leaves, seedling growth inhibition, induction of a ROS burst, electrolyte leakage, cytoplasm shrinkage, autofluorescence, cell death, and induction of defense genes, and this abilities are independent of the catalytic activity. Only exhibits elicitor activity in certain plants such as tomato, but not in N.benthamiana. This is Endo-1,4-beta-xylanase 11A from Botryotinia fuckeliana (strain B05.10) (Noble rot fungus).